Here is a 373-residue protein sequence, read N- to C-terminus: Leucine aminopeptidase 1 (373 aa).

Residues 1–18 form the signal peptide; the sequence is MKLLSVLALSATATSVLG. Residue Asn-136 is glycosylated (N-linked (GlcNAc...) asparagine). Residues His-176 and Asp-195 each coordinate Zn(2+). Asn-196 carries N-linked (GlcNAc...) asparagine glycosylation. Zn(2+) contacts are provided by Glu-234 and Asp-261. N-linked (GlcNAc...) asparagine glycosylation occurs at Asn-284. A disulfide bridge connects residues Cys-310 and Cys-314. Position 343 (His-343) interacts with Zn(2+).

The protein belongs to the peptidase M28 family. M28E subfamily. In terms of assembly, monomer. Requires Zn(2+) as cofactor.

It localises to the secreted. Functionally, extracellular aminopeptidase which contributes to pathogenicity. The chain is Leucine aminopeptidase 1 (LAP1) from Trichophyton equinum (Horse ringworm fungus).